The sequence spans 206 residues: N-(5'-phosphoribosyl)anthranilate isomerase (206 aa).

Belongs to the TrpF family.

The catalysed reaction is N-(5-phospho-beta-D-ribosyl)anthranilate = 1-(2-carboxyphenylamino)-1-deoxy-D-ribulose 5-phosphate. It functions in the pathway amino-acid biosynthesis; L-tryptophan biosynthesis; L-tryptophan from chorismate: step 3/5. The chain is N-(5'-phosphoribosyl)anthranilate isomerase from Pseudomonas savastanoi pv. phaseolicola (strain 1448A / Race 6) (Pseudomonas syringae pv. phaseolicola (strain 1448A / Race 6)).